We begin with the raw amino-acid sequence, 444 residues long: Trigger factor (444 aa).

Positions 166–251 (GDQIVIDFKG…VKAVKAPKPA (86 aa)) constitute a PPIase FKBP-type domain.

It belongs to the FKBP-type PPIase family. Tig subfamily.

The protein localises to the cytoplasm. The enzyme catalyses [protein]-peptidylproline (omega=180) = [protein]-peptidylproline (omega=0). Functionally, involved in protein export. Acts as a chaperone by maintaining the newly synthesized protein in an open conformation. Functions as a peptidyl-prolyl cis-trans isomerase. The polypeptide is Trigger factor (Cereibacter sphaeroides (strain ATCC 17025 / ATH 2.4.3) (Rhodobacter sphaeroides)).